We begin with the raw amino-acid sequence, 319 residues long: Annexin A5 (319 aa).

Ala-2 is subject to N-acetylalanine. Annexin repeat units lie at residues 13 to 84, 85 to 156, 168 to 240, and 244 to 315; these read FDGR…ALMK, PSRL…VLLQ, AQVE…AVVK, and SIPA…LLCG. Lys-27 is covalently cross-linked (Glycyl lysine isopeptide (Lys-Gly) (interchain with G-Cter in SUMO1); alternate). Lys-27 is covalently cross-linked (Glycyl lysine isopeptide (Lys-Gly) (interchain with G-Cter in SUMO2); alternate). Position 35 is a phosphoserine (Ser-35). 5 positions are modified to N6-acetyllysine: Lys-68, Lys-74, Lys-77, Lys-95, and Lys-99. An N6-succinyllysine modification is found at Lys-288. Residues 312–318 carry the [IL]-x-C-x-x-[DE] motif motif; that stretch reads LLCGGED.

This sequence belongs to the annexin family. As to quaternary structure, monomer. Binds ATRX, EIF5B and DNMT1. S-nitrosylation is induced by interferon-gamma and oxidatively-modified low-densitity lipoprotein (LDL(ox)) possibly implicating the iNOS-S100A8/9 transnitrosylase complex.

Functionally, this protein is an anticoagulant protein that acts as an indirect inhibitor of the thromboplastin-specific complex, which is involved in the blood coagulation cascade. This chain is Annexin A5 (Anxa5), found in Rattus norvegicus (Rat).